The sequence spans 418 residues: DnaJ protein homolog 2 (418 aa).

Residues 11-76 (NTKYYEVLGV…REIYDQYGEE (66 aa)) enclose the J domain. The segment at 135–219 (GTSKKLSLSR…CKGEKVVQQK (85 aa)) adopts a CR-type zinc-finger fold. 4 CXXCXGXG motif repeats span residues 148-155 (CTKCKGKG), 164-171 (CASCQGSG), 191-198 (CNECKGTG), and 207-214 (CPQCKGEK). The disordered stretch occupies residues 382–418 (VNIEEEMRRKQHQQAQEAYDEDDEGHGGAQRVQCAQQ). C415 carries the cysteine methyl ester modification. C415 is lipidated: S-farnesyl cysteine. Positions 416–418 (AQQ) are cleaved as a propeptide — removed in mature form.

The protein localises to the membrane. Functionally, plays a continuous role in plant development probably in the structural organization of compartments. In Allium porrum (Leek), this protein is DnaJ protein homolog 2 (LDJ2).